Reading from the N-terminus, the 380-residue chain is Putative 8-amino-7-oxononanoate synthase (380 aa).

A substrate-binding site is contributed by Arg-18. Residue 106–107 (GY) participates in pyridoxal 5'-phosphate binding. His-131 is a substrate binding site. Pyridoxal 5'-phosphate is bound by residues Ser-179, 205-208 (DEAH), and 236-239 (TFGK). Lys-239 is subject to N6-(pyridoxal phosphate)lysine. Thr-352 lines the substrate pocket.

This sequence belongs to the class-II pyridoxal-phosphate-dependent aminotransferase family. BioF subfamily. As to quaternary structure, homodimer. Requires pyridoxal 5'-phosphate as cofactor.

The enzyme catalyses 6-carboxyhexanoyl-[ACP] + L-alanine + H(+) = (8S)-8-amino-7-oxononanoate + holo-[ACP] + CO2. Its pathway is cofactor biosynthesis; biotin biosynthesis. Functionally, catalyzes the decarboxylative condensation of pimeloyl-[acyl-carrier protein] and L-alanine to produce 8-amino-7-oxononanoate (AON), [acyl-carrier protein], and carbon dioxide. The chain is Putative 8-amino-7-oxononanoate synthase (bioF) from Neisseria meningitidis serogroup C (strain 053442).